A 212-amino-acid chain; its full sequence is Thymidylate kinase (212 aa).

An ATP-binding site is contributed by 10–17; sequence GPDGSGKS.

This sequence belongs to the thymidylate kinase family.

The enzyme catalyses dTMP + ATP = dTDP + ADP. Functionally, phosphorylation of dTMP to form dTDP in both de novo and salvage pathways of dTTP synthesis. This Exiguobacterium sp. (strain ATCC BAA-1283 / AT1b) protein is Thymidylate kinase.